A 113-amino-acid polypeptide reads, in one-letter code: Large ribosomal subunit protein uL22 (113 aa).

It belongs to the universal ribosomal protein uL22 family. As to quaternary structure, part of the 50S ribosomal subunit.

In terms of biological role, this protein binds specifically to 23S rRNA; its binding is stimulated by other ribosomal proteins, e.g. L4, L17, and L20. It is important during the early stages of 50S assembly. It makes multiple contacts with different domains of the 23S rRNA in the assembled 50S subunit and ribosome. Functionally, the globular domain of the protein is located near the polypeptide exit tunnel on the outside of the subunit, while an extended beta-hairpin is found that lines the wall of the exit tunnel in the center of the 70S ribosome. The sequence is that of Large ribosomal subunit protein uL22 from Syntrophomonas wolfei subsp. wolfei (strain DSM 2245B / Goettingen).